A 227-amino-acid polypeptide reads, in one-letter code: A-type potassium channel modulatory protein KCNIP1 (227 aa).

An EF-hand 1; degenerate domain is found at 38–94; the sequence is LEMTMVCHRPEGLEQLEAQTNFTKRELQVLYRGFKNECPSGVVNEDTFKQIYAQFFP. 3 consecutive EF-hand domains span residues 97–132, 133–168, and 181–216; these read DASTYAHYLFNAFDTTQTGSVKFEDFVTALSILLRG, TVHEKLRWTFNLYDINKDGYINKEEMMDIVKAIYDM, and TPRQHVDVFFQKMDKNKDGIVTLDEFLESCQEDDNI. Ca(2+) contacts are provided by Asp146, Asn148, Asp150, Tyr152, Glu157, Asp194, Asn196, Asp198, and Glu205. Positions 214 to 227 are interaction with KCND2; the sequence is DNIMRSLQLFQNVM.

Belongs to the recoverin family. As to quaternary structure, component of heteromultimeric potassium channels. Identified in potassium channel complexes containing KCND1, KCND2, KCND3, KCNIP1, KCNIP2, KCNIP3, KCNIP4, DPP6 and DPP10. Part of a heterooctamer composed of the tetrameric channel and four KCNIP1 chains. Probably part of a complex consisting of KCNIP1, KCNIP2 isoform 3 and KCND2. Self-associates to form homodimers and homotetramers. Interacts with KCNIP2 isoform 3 in a calcium-dependent manner. Interacts with Naja atra venom CTX3. Interacts with KCND2; this interaction mediates the capture of both the N- and C-terminus of KCND2, thus preventing KCND2 N-type inactivation and modulates the channel gating kinetics. Interacts with KCND3; each KCNIP1 monomer interacts with two adjacent KCND3 subunits, through both the N-terminal inactivation ball of a KCND3 subunit and a C-terminal helix from the adjacent KCND3 subunit, clamping them together; this interaction stabilizes the tetrameric form and modulates the channel gating kinetics namely channel activation and inactivation kinetics and rate of recovery from inactivation. In terms of tissue distribution, isoform 1 and isoform 2 are expressed in brain and kidney. Isoform 1 is also expressed in liver, pancreas, skeletal muscle, small intestine and testis. Isoform 2 is also expressed in lung, pancreas, leukocytes, prostate and thymus.

It localises to the cell membrane. It is found in the cytoplasm. Its subcellular location is the cell projection. The protein localises to the dendrite. Regulatory subunit of Kv4/D (Shal)-type voltage-gated rapidly inactivating A-type potassium channels. Regulates channel density, inactivation kinetics and rate of recovery from inactivation in a calcium-dependent and isoform-specific manner. In vitro, modulates KCND1/Kv4.1 and KCND2/Kv4.2 currents. Increases the presence of KCND2 at the cell surface. The protein is A-type potassium channel modulatory protein KCNIP1 of Homo sapiens (Human).